A 293-amino-acid polypeptide reads, in one-letter code: 4-diphosphocytidyl-2-C-methyl-D-erythritol kinase (293 aa).

Residue Lys16 is part of the active site. Residue Pro99 to Ser109 coordinates ATP. Residue Asp141 is part of the active site.

The protein belongs to the GHMP kinase family. IspE subfamily.

The enzyme catalyses 4-CDP-2-C-methyl-D-erythritol + ATP = 4-CDP-2-C-methyl-D-erythritol 2-phosphate + ADP + H(+). Its pathway is isoprenoid biosynthesis; isopentenyl diphosphate biosynthesis via DXP pathway; isopentenyl diphosphate from 1-deoxy-D-xylulose 5-phosphate: step 3/6. Catalyzes the phosphorylation of the position 2 hydroxy group of 4-diphosphocytidyl-2C-methyl-D-erythritol. This Paraburkholderia phytofirmans (strain DSM 17436 / LMG 22146 / PsJN) (Burkholderia phytofirmans) protein is 4-diphosphocytidyl-2-C-methyl-D-erythritol kinase.